The following is a 320-amino-acid chain: Serpentine receptor class gamma-17 (320 aa).

Transmembrane regions (helical) follow at residues 25 to 45 (AIYFVTACYLSVGLFCHISLL), 80 to 100 (IFFGRIFMYIPQLCPFVSTFF), 155 to 175 (FIMLILPFAGLWNIMISQVIA), 192 to 212 (WASLSLFQSICILTALGFTIV), 237 to 257 (FTSISISCTFLLVAGTQLTFA), and 268 to 288 (YILQFLAFDTFNVGSAIIMFL).

This sequence belongs to the nematode receptor-like protein srg family.

The protein localises to the membrane. In Caenorhabditis elegans, this protein is Serpentine receptor class gamma-17 (srg-17).